Reading from the N-terminus, the 315-residue chain is Homoserine O-succinyltransferase (315 aa).

Catalysis depends on cysteine 142, which acts as the Acyl-thioester intermediate. Residues lysine 163 and serine 192 each coordinate substrate. Histidine 235 functions as the Proton acceptor in the catalytic mechanism. Glutamate 237 is an active-site residue. Substrate is bound at residue arginine 249.

The protein belongs to the MetA family.

The protein localises to the cytoplasm. It catalyses the reaction L-homoserine + succinyl-CoA = O-succinyl-L-homoserine + CoA. Its pathway is amino-acid biosynthesis; L-methionine biosynthesis via de novo pathway; O-succinyl-L-homoserine from L-homoserine: step 1/1. Functionally, transfers a succinyl group from succinyl-CoA to L-homoserine, forming succinyl-L-homoserine. This chain is Homoserine O-succinyltransferase, found in Tolumonas auensis (strain DSM 9187 / NBRC 110442 / TA 4).